Reading from the N-terminus, the 208-residue chain is Small ribosomal subunit protein uS4 (208 aa).

Residues Thr-97 to Leu-160 enclose the S4 RNA-binding domain.

Belongs to the universal ribosomal protein uS4 family. In terms of assembly, part of the 30S ribosomal subunit. Contacts protein S5. The interaction surface between S4 and S5 is involved in control of translational fidelity.

Its function is as follows. One of the primary rRNA binding proteins, it binds directly to 16S rRNA where it nucleates assembly of the body of the 30S subunit. Functionally, with S5 and S12 plays an important role in translational accuracy. The chain is Small ribosomal subunit protein uS4 from Xanthomonas oryzae pv. oryzae (strain MAFF 311018).